The sequence spans 172 residues: Odorant-binding protein (172 aa).

The first 15 residues, M1–C15, serve as a signal peptide directing secretion. Cystine bridges form between C60/C64 and C79/C170.

Belongs to the calycin superfamily. Lipocalin family. In terms of assembly, homodimer.

The protein resides in the secreted. Its function is as follows. This protein is found in nasal epithelium and it binds a wide variety of chemical odorants. The protein is Odorant-binding protein (Obp1f) of Rattus norvegicus (Rat).